The following is a 128-amino-acid chain: Glycine cleavage system H protein (128 aa).

One can recognise a Lipoyl-binding domain in the interval 22–104 (VATVGITEHA…YGEGWIFKMK (83 aa)). Lys-63 bears the N6-lipoyllysine mark.

Belongs to the GcvH family. The glycine cleavage system is composed of four proteins: P, T, L and H. Requires (R)-lipoate as cofactor.

The glycine cleavage system catalyzes the degradation of glycine. The H protein shuttles the methylamine group of glycine from the P protein to the T protein. This is Glycine cleavage system H protein from Methylacidiphilum infernorum (isolate V4) (Methylokorus infernorum (strain V4)).